The primary structure comprises 599 residues: Aspartate--tRNA(Asp/Asn) ligase (599 aa).

Glu172 is an L-aspartate binding site. The aspartate stretch occupies residues 196 to 199 (QLFK). Arg218 is an L-aspartate binding site. Residues 218–220 (RDE) and Gln227 contribute to the ATP site. His454 is a binding site for L-aspartate. Position 488 (Glu488) interacts with ATP. Arg495 contacts L-aspartate. Residue 540 to 543 (GLDR) coordinates ATP.

This sequence belongs to the class-II aminoacyl-tRNA synthetase family. Type 1 subfamily. Homodimer.

It is found in the cytoplasm. The enzyme catalyses tRNA(Asx) + L-aspartate + ATP = L-aspartyl-tRNA(Asx) + AMP + diphosphate. Functionally, aspartyl-tRNA synthetase with relaxed tRNA specificity since it is able to aspartylate not only its cognate tRNA(Asp) but also tRNA(Asn). Reaction proceeds in two steps: L-aspartate is first activated by ATP to form Asp-AMP and then transferred to the acceptor end of tRNA(Asp/Asn). This chain is Aspartate--tRNA(Asp/Asn) ligase, found in Methylibium petroleiphilum (strain ATCC BAA-1232 / LMG 22953 / PM1).